Reading from the N-terminus, the 201-residue chain is Proteasome subunit beta type-2 (201 aa).

An N-acetylmethionine modification is found at Met1.

Belongs to the peptidase T1B family. In terms of assembly, the 26S proteasome consists of a 20S proteasome core and two 19S regulatory subunits. The 20S proteasome core is a barrel-shaped complex made of 28 subunits that are arranged in four stacked rings. The two outer rings are each formed by seven alpha subunits, and the two inner rings are formed by seven beta subunits. The proteolytic activity is exerted by three beta-subunits PSMB5, PSMB6 and PSMB7. As to quaternary structure, (Microbial infection) Interacts with HIV-1 protein Tat.

It localises to the cytoplasm. The protein localises to the nucleus. Functionally, non-catalytic component of the 20S core proteasome complex involved in the proteolytic degradation of most intracellular proteins. This complex plays numerous essential roles within the cell by associating with different regulatory particles. Associated with two 19S regulatory particles, forms the 26S proteasome and thus participates in the ATP-dependent degradation of ubiquitinated proteins. The 26S proteasome plays a key role in the maintenance of protein homeostasis by removing misfolded or damaged proteins that could impair cellular functions, and by removing proteins whose functions are no longer required. Associated with the PA200 or PA28, the 20S proteasome mediates ubiquitin-independent protein degradation. This type of proteolysis is required in several pathways including spermatogenesis (20S-PA200 complex) or generation of a subset of MHC class I-presented antigenic peptides (20S-PA28 complex). The sequence is that of Proteasome subunit beta type-2 from Homo sapiens (Human).